The chain runs to 249 residues: DNA repair protein RecO (249 aa).

It belongs to the RecO family.

In terms of biological role, involved in DNA repair and RecF pathway recombination. The chain is DNA repair protein RecO from Exiguobacterium sibiricum (strain DSM 17290 / CCUG 55495 / CIP 109462 / JCM 13490 / 255-15).